A 46-amino-acid polypeptide reads, in one-letter code: Small polypeptide DEVIL 5 (46 aa).

The helical transmembrane segment at 8 to 24 (VGGTKRKMWSRGVGGVV) threads the bilayer. The tract at residues 15–46 (MWSRGVGGVVREQKAKLYIIRRCVVMLLCWHD) is required for DVL/RTFL small polypeptide activity.

The protein belongs to the DVL/RTFL small polypeptides family. As to expression, mostly expressed in roots and flowers, and, to a lower extent, in leaves and stems.

The protein resides in the cell membrane. In terms of biological role, small polypeptide acting as a regulatory molecule which coordinates cellular responses required for differentiation, growth and development, including leaves shape, pedicule elongation, inflorescence organization and fruit maturation, probably by restricting polar cell proliferation in lateral organs and coordinating socket cell recruitment and differentiation at trichome sites. The polypeptide is Small polypeptide DEVIL 5 (Arabidopsis thaliana (Mouse-ear cress)).